Consider the following 539-residue polypeptide: Putative serine/threonine-protein kinase L670 (539 aa).

A Cyclin N-terminal domain is found at 1–115; it reads MSLFNNHPEL…ILKVFKFGLH (115 aa). In terms of domain architecture, Protein kinase spans 258–519; the sequence is MNVIEKLGIG…VLKIFSECFV (262 aa). ATP is bound by residues 264 to 272 and Lys-285; that span reads LGIGSFGLV. The active-site Proton acceptor is the Asp-375.

The protein belongs to the protein kinase superfamily. Ser/Thr protein kinase family.

It carries out the reaction L-seryl-[protein] + ATP = O-phospho-L-seryl-[protein] + ADP + H(+). The enzyme catalyses L-threonyl-[protein] + ATP = O-phospho-L-threonyl-[protein] + ADP + H(+). This Acanthamoeba polyphaga mimivirus (APMV) protein is Putative serine/threonine-protein kinase L670.